The chain runs to 287 residues: ADP-dependent (S)-NAD(P)H-hydrate dehydratase (287 aa).

Positions 7–283 (TTALVKKFIP…PEISTVMKPF (277 aa)) constitute a YjeF C-terminal domain. 2 residues coordinate (6S)-NADPHX: A42 and H159. AMP is bound by residues 196-200 (KGSTD) and G224. D225 contacts (6S)-NADPHX.

It belongs to the NnrD/CARKD family. As to quaternary structure, homotetramer. Mg(2+) serves as cofactor.

The enzyme catalyses (6S)-NADHX + ADP = AMP + phosphate + NADH + H(+). The catalysed reaction is (6S)-NADPHX + ADP = AMP + phosphate + NADPH + H(+). Functionally, catalyzes the dehydration of the S-form of NAD(P)HX at the expense of ADP, which is converted to AMP. Together with NAD(P)HX epimerase, which catalyzes the epimerization of the S- and R-forms, the enzyme allows the repair of both epimers of NAD(P)HX, a damaged form of NAD(P)H that is a result of enzymatic or heat-dependent hydration. The sequence is that of ADP-dependent (S)-NAD(P)H-hydrate dehydratase from Nitrosopumilus maritimus (strain SCM1).